Consider the following 859-residue polypeptide: DNA mismatch repair protein MutS (859 aa).

622-629 lines the ATP pocket; that stretch reads GPNMGGKS.

It belongs to the DNA mismatch repair MutS family.

Its function is as follows. This protein is involved in the repair of mismatches in DNA. It is possible that it carries out the mismatch recognition step. This protein has a weak ATPase activity. In Syntrophomonas wolfei subsp. wolfei (strain DSM 2245B / Goettingen), this protein is DNA mismatch repair protein MutS.